The following is a 406-amino-acid chain: Lissencephaly-1 homolog (406 aa).

The region spanning 7–39 (QREELNKAIADYLRSNGYESALEAFQKEAEMPG) is the LisH domain. Positions 54–81 (TSVIRLQKKVMDLEAKLAEAEKEFQSGG) form a coiled coil. Basic and acidic residues predominate over residues 74–89 (EKEFQSGGPNKKERSP). Residues 74-99 (EKEFQSGGPNKKERSPSEWIPRPPAR) form a disordered region. 7 WD repeats span residues 104–145 (GHRS…RTLK), 146–185 (GHTD…NIKT), 188–227 (GHDH…CVKT), 230–269 (GHRE…CKAE), 272–329 (EHEH…CIMT), 332–371 (GHDN…CQKT), and 374–406 (AHQH…WECR).

The protein belongs to the WD repeat LIS1/nudF family.

Its subcellular location is the cytoplasm. It is found in the cytoskeleton. It localises to the microtubule organizing center. The protein localises to the centrosome. In terms of biological role, positively regulates the activity of the minus-end directed microtubule motor protein dynein. May enhance dynein-mediated microtubule sliding by targeting dynein to the microtubule plus end. Required for several dynein- and microtubule-dependent processes. This Branchiostoma floridae (Florida lancelet) protein is Lissencephaly-1 homolog.